The sequence spans 341 residues: tRNA N6-adenosine threonylcarbamoyltransferase (341 aa).

Positions 111 and 115 each coordinate Fe cation. Residues 134-138, Asp-167, Gly-180, and Asn-276 each bind substrate; that span reads LVSGG. Asp-304 is a binding site for Fe cation.

The protein belongs to the KAE1 / TsaD family. Fe(2+) is required as a cofactor.

It localises to the cytoplasm. It carries out the reaction L-threonylcarbamoyladenylate + adenosine(37) in tRNA = N(6)-L-threonylcarbamoyladenosine(37) in tRNA + AMP + H(+). Functionally, required for the formation of a threonylcarbamoyl group on adenosine at position 37 (t(6)A37) in tRNAs that read codons beginning with adenine. Is involved in the transfer of the threonylcarbamoyl moiety of threonylcarbamoyl-AMP (TC-AMP) to the N6 group of A37, together with TsaE and TsaB. TsaD likely plays a direct catalytic role in this reaction. In Stutzerimonas stutzeri (strain A1501) (Pseudomonas stutzeri), this protein is tRNA N6-adenosine threonylcarbamoyltransferase.